The sequence spans 76 residues: MPTIVNCPTCKSKVEWSEQSPHRPFCSKRCQLIDLGEWSFENNRISAPITSAEDFSQDMIEDIEAMMAKNEDDFFK.

Zn(2+) is bound by residues C7, C10, C26, and C30.

The protein belongs to the DNA gyrase inhibitor YacG family. Interacts with GyrB. Requires Zn(2+) as cofactor.

Inhibits all the catalytic activities of DNA gyrase by preventing its interaction with DNA. Acts by binding directly to the C-terminal domain of GyrB, which probably disrupts DNA binding by the gyrase. This is DNA gyrase inhibitor YacG from Pseudoalteromonas translucida (strain TAC 125).